A 901-amino-acid chain; its full sequence is Core protein VP3 (901 aa).

It belongs to the orbivirus VP3 family.

Its subcellular location is the virion. In terms of biological role, the VP3 protein is one of the five proteins (with VP1, VP4, VP6 and VP7) which form the inner capsid of the virus. This Bluetongue virus 10 (isolate USA) (BTV 10) protein is Core protein VP3 (Segment-3).